Consider the following 424-residue polypeptide: Glutamate-1-semialdehyde 2,1-aminomutase (424 aa).

Lys268 is subject to N6-(pyridoxal phosphate)lysine.

The protein belongs to the class-III pyridoxal-phosphate-dependent aminotransferase family. HemL subfamily. It depends on pyridoxal 5'-phosphate as a cofactor.

The protein resides in the cytoplasm. It catalyses the reaction (S)-4-amino-5-oxopentanoate = 5-aminolevulinate. The protein operates within porphyrin-containing compound metabolism; protoporphyrin-IX biosynthesis; 5-aminolevulinate from L-glutamyl-tRNA(Glu): step 2/2. This chain is Glutamate-1-semialdehyde 2,1-aminomutase, found in Methanosarcina acetivorans (strain ATCC 35395 / DSM 2834 / JCM 12185 / C2A).